The sequence spans 100 residues: Small ribosomal subunit protein uS14c (100 aa).

The protein belongs to the universal ribosomal protein uS14 family. As to quaternary structure, part of the 30S ribosomal subunit.

It is found in the plastid. Its subcellular location is the chloroplast. Functionally, binds 16S rRNA, required for the assembly of 30S particles. This chain is Small ribosomal subunit protein uS14c, found in Emiliania huxleyi (Coccolithophore).